We begin with the raw amino-acid sequence, 340 residues long: L-lysine 2,3-aminomutase (340 aa).

Residues 106–321 (RKYNNRILLL…SMISGFLVPK (216 aa)) form the Radical SAM core domain. [4Fe-4S] cluster contacts are provided by C120, C124, and C127. The residue at position 332 (K332) is an N6-(pyridoxal phosphate)lysine.

This sequence belongs to the radical SAM superfamily. KamA family. It depends on [4Fe-4S] cluster as a cofactor. Requires pyridoxal 5'-phosphate as cofactor.

It catalyses the reaction L-lysine = D-beta-lysine. With EpmA is involved in the beta-lysylation step of the post-translational modification of translation elongation factor P (EF-P) on 'Lys-34'. EpmB appears to act before EpmA. Displays lysine 2,3-aminomutase activity, producing (R)-beta-lysine from (S)-alpha-lysine (L-lysine). This Buchnera aphidicola subsp. Baizongia pistaciae (strain Bp) protein is L-lysine 2,3-aminomutase (epmB).